We begin with the raw amino-acid sequence, 255 residues long: Phosphoribosylformylglycinamidine synthase subunit PurQ (255 aa).

Positions 6 to 255 (TLILRTPGTN…TNAVKWARQV (250 aa)) constitute a Glutamine amidotransferase type-1 domain. Catalysis depends on Cys-96, which acts as the Nucleophile. Residues His-217 and Glu-219 contribute to the active site.

As to quaternary structure, part of the FGAM synthase complex composed of 1 PurL, 1 PurQ and 2 PurS subunits.

The protein resides in the cytoplasm. It catalyses the reaction N(2)-formyl-N(1)-(5-phospho-beta-D-ribosyl)glycinamide + L-glutamine + ATP + H2O = 2-formamido-N(1)-(5-O-phospho-beta-D-ribosyl)acetamidine + L-glutamate + ADP + phosphate + H(+). It carries out the reaction L-glutamine + H2O = L-glutamate + NH4(+). Its pathway is purine metabolism; IMP biosynthesis via de novo pathway; 5-amino-1-(5-phospho-D-ribosyl)imidazole from N(2)-formyl-N(1)-(5-phospho-D-ribosyl)glycinamide: step 1/2. Functionally, part of the phosphoribosylformylglycinamidine synthase complex involved in the purines biosynthetic pathway. Catalyzes the ATP-dependent conversion of formylglycinamide ribonucleotide (FGAR) and glutamine to yield formylglycinamidine ribonucleotide (FGAM) and glutamate. The FGAM synthase complex is composed of three subunits. PurQ produces an ammonia molecule by converting glutamine to glutamate. PurL transfers the ammonia molecule to FGAR to form FGAM in an ATP-dependent manner. PurS interacts with PurQ and PurL and is thought to assist in the transfer of the ammonia molecule from PurQ to PurL. The chain is Phosphoribosylformylglycinamidine synthase subunit PurQ from Dehalococcoides mccartyi (strain ATCC BAA-2266 / KCTC 15142 / 195) (Dehalococcoides ethenogenes (strain 195)).